The following is a 37-amino-acid chain: Large ribosomal subunit protein bL36 (37 aa).

It belongs to the bacterial ribosomal protein bL36 family.

This chain is Large ribosomal subunit protein bL36, found in Brevibacillus brevis (strain 47 / JCM 6285 / NBRC 100599).